We begin with the raw amino-acid sequence, 253 residues long: NAD(P)H-quinone oxidoreductase subunit K (253 aa).

The [4Fe-4S] cluster site is built by C68, C69, C133, and C164.

It belongs to the complex I 20 kDa subunit family. NDH-1 can be composed of about 15 different subunits; different subcomplexes with different compositions have been identified which probably have different functions. It depends on [4Fe-4S] cluster as a cofactor.

It localises to the cellular thylakoid membrane. The catalysed reaction is a plastoquinone + NADH + (n+1) H(+)(in) = a plastoquinol + NAD(+) + n H(+)(out). It catalyses the reaction a plastoquinone + NADPH + (n+1) H(+)(in) = a plastoquinol + NADP(+) + n H(+)(out). Functionally, NDH-1 shuttles electrons from an unknown electron donor, via FMN and iron-sulfur (Fe-S) centers, to quinones in the respiratory and/or the photosynthetic chain. The immediate electron acceptor for the enzyme in this species is believed to be plastoquinone. Couples the redox reaction to proton translocation, and thus conserves the redox energy in a proton gradient. Cyanobacterial NDH-1 also plays a role in inorganic carbon-concentration. The chain is NAD(P)H-quinone oxidoreductase subunit K from Synechococcus sp. (strain CC9311).